The chain runs to 92 residues: DNA-directed RNA polymerase subunit Rpo5 (92 aa).

This sequence belongs to the archaeal Rpo5/eukaryotic RPB5 RNA polymerase subunit family. As to quaternary structure, part of the RNA polymerase complex.

The protein localises to the cytoplasm. The catalysed reaction is RNA(n) + a ribonucleoside 5'-triphosphate = RNA(n+1) + diphosphate. Its function is as follows. DNA-dependent RNA polymerase (RNAP) catalyzes the transcription of DNA into RNA using the four ribonucleoside triphosphates as substrates. This is DNA-directed RNA polymerase subunit Rpo5 from Methanopyrus kandleri (strain AV19 / DSM 6324 / JCM 9639 / NBRC 100938).